Here is a 318-residue protein sequence, read N- to C-terminus: Ubiquinone biosynthesis protein COQ9, mitochondrial (318 aa).

A mitochondrion-targeting transit peptide spans 1–44 (MAAAAVSGALGRAGWRLLQLRCLPVARCRQALVPRAFHASAVGL). Residues 16-31 (RLLQLRCLPVARCRQA) carry the SIFI-degron motif. Residues 44–98 (LRSSDEQKQQPPNSFSQQHSETQGAEKPDPESSHSPPRYTDQGGEEEEDYESEEQ) are disordered. The segment covering 52 to 66 (QQPPNSFSQQHSETQ) has biased composition (polar residues). A compositionally biased stretch (acidic residues) spans 86 to 97 (GGEEEEDYESEE). Lysine 175 bears the N6-acetyllysine mark. Arginine 244 lines the a 1,2-diacylglycero-3-phosphoethanolamine pocket.

The protein belongs to the COQ9 family. Homodimer. Heterodimer; two heterodimers of COQ7:COQ9 come together on the same side of the lipid pseudo-bilayer and form a curved tetramer with a hydrophobic surface suitable for membrane interaction. These two tetramers assemble into a soluble octamer with a pseudo-bilayer of lipids captured within. Interacts with COQ7; this interaction allows ubiquinone (CoQ) isoprene intermediates presentation to COQ7 and facilitates the COQ7-mediated hydroxylase step. In response to mitochondrial stress, the precursor protein is ubiquitinated by the SIFI complex in the cytoplasm before mitochondrial import, leading to its degradation. Within the SIFI complex, UBR4 initiates ubiquitin chain that are further elongated or branched by KCMF1.

It is found in the mitochondrion. It functions in the pathway cofactor biosynthesis; ubiquinone biosynthesis. Functionally, membrane-associated protein that warps the membrane surface to access and bind aromatic isoprenes with high specificity, including ubiquinone (CoQ) isoprene intermediates and presents them directly to COQ7, therefore facilitating the COQ7-mediated hydroxylase step. Participates in the biosynthesis of coenzyme Q, also named ubiquinone, an essential lipid-soluble electron transporter for aerobic cellular respiration. This Homo sapiens (Human) protein is Ubiquinone biosynthesis protein COQ9, mitochondrial.